We begin with the raw amino-acid sequence, 144 residues long: MKLHTLKSTPGARVEKHRVGRGHAAGKGKQAGKGQSGQNKRHGHRLGFEGGQTPWFRRIGKRGFTNVNHVEYQVVNLKDLEQNFKANATVDLESLFKANLIKRSMPVKLLGNGKLTKKLNVTLHAASKSAIDAVEQAGGKFTIL.

The tract at residues 1-52 (MKLHTLKSTPGARVEKHRVGRGHAAGKGKQAGKGQSGQNKRHGHRLGFEGGQ) is disordered. Basic residues predominate over residues 15 to 26 (EKHRVGRGHAAG).

This sequence belongs to the universal ribosomal protein uL15 family. As to quaternary structure, part of the 50S ribosomal subunit.

Binds to the 23S rRNA. The sequence is that of Large ribosomal subunit protein uL15 from Mycoplasmopsis agalactiae (strain NCTC 10123 / CIP 59.7 / PG2) (Mycoplasma agalactiae).